The primary structure comprises 208 residues: Holliday junction branch migration complex subunit RuvA (208 aa).

Residues 1 to 64 form a domain I region; the sequence is MIGRLHGTVA…DDGQALYGFA (64 aa). The domain II stretch occupies residues 65 to 143; the sequence is SRAERDLFRV…GLLPAASGGV (79 aa). The tract at residues 139-162 is disordered; that stretch reads ASGGVPARTGSGEQLDAPAGPQGS. Residues 144–157 are flexible linker; it reads PARTGSGEQLDAPA. The domain III stretch occupies residues 158 to 208; that stretch reads GPQGSREDAVSALVALGYKPAEAGRLVNAVPGANDLPSEELIRRALQAAVR.

It belongs to the RuvA family. Homotetramer. Forms an RuvA(8)-RuvB(12)-Holliday junction (HJ) complex. HJ DNA is sandwiched between 2 RuvA tetramers; dsDNA enters through RuvA and exits via RuvB. An RuvB hexamer assembles on each DNA strand where it exits the tetramer. Each RuvB hexamer is contacted by two RuvA subunits (via domain III) on 2 adjacent RuvB subunits; this complex drives branch migration. In the full resolvosome a probable DNA-RuvA(4)-RuvB(12)-RuvC(2) complex forms which resolves the HJ.

It localises to the cytoplasm. The RuvA-RuvB-RuvC complex processes Holliday junction (HJ) DNA during genetic recombination and DNA repair, while the RuvA-RuvB complex plays an important role in the rescue of blocked DNA replication forks via replication fork reversal (RFR). RuvA specifically binds to HJ cruciform DNA, conferring on it an open structure. The RuvB hexamer acts as an ATP-dependent pump, pulling dsDNA into and through the RuvAB complex. HJ branch migration allows RuvC to scan DNA until it finds its consensus sequence, where it cleaves and resolves the cruciform DNA. The chain is Holliday junction branch migration complex subunit RuvA from Alkalilimnicola ehrlichii (strain ATCC BAA-1101 / DSM 17681 / MLHE-1).